Here is a 176-residue protein sequence, read N- to C-terminus: Signal peptidase complex catalytic subunit SEC11 (176 aa).

The Cytoplasmic portion of the chain corresponds to 1 to 9 (MNLRQQLGS). The helical; Signal-anchor for type II membrane protein transmembrane segment at 10–30 (GLSMAMVLASAFAFWKLFSIV) threads the bilayer. Topologically, residues 31–176 (TMSNSPIVVV…LGLSALVQDE (146 aa)) are lumenal. Catalysis depends on charge relay system residues serine 44, histidine 83, and aspartate 118. Positions 162–173 (ALMALLGLSALV) are C-terminal short (CTS) helix.

It belongs to the peptidase S26B family. In terms of assembly, component of the signal peptidase complex (SPC) composed of a catalytic subunit SEC11 and three accessory subunits SPC1, SPC2 and SPC3. The complex induces a local thinning of the ER membrane which is used to measure the length of the signal peptide (SP) h-region of protein substrates. This ensures the selectivity of the complex towards h-regions shorter than 18-20 amino acids. SPC associates with the translocon complex.

The protein resides in the endoplasmic reticulum membrane. It catalyses the reaction Cleavage of hydrophobic, N-terminal signal or leader sequences from secreted and periplasmic proteins.. Catalytic component of the signal peptidase complex (SPC) which catalyzes the cleavage of N-terminal signal sequences from nascent proteins as they are translocated into the lumen of the endoplasmic reticulum. Specifically cleaves N-terminal signal peptides that contain a hydrophobic alpha-helix (h-region) shorter than 18-20 amino acids. This chain is Signal peptidase complex catalytic subunit SEC11 (SEC11), found in Ogataea parapolymorpha (strain ATCC 26012 / BCRC 20466 / JCM 22074 / NRRL Y-7560 / DL-1) (Yeast).